An 84-amino-acid polypeptide reads, in one-letter code: ATP synthase subunit c (84 aa).

2 helical membrane-spanning segments follow: residues 9 to 29 (IIGA…GFAI) and 54 to 74 (IVAG…LLFI).

Belongs to the ATPase C chain family. In terms of assembly, F-type ATPases have 2 components, F(1) - the catalytic core - and F(0) - the membrane proton channel. F(1) has five subunits: alpha(3), beta(3), gamma(1), delta(1), epsilon(1). F(0) has three main subunits: a(1), b(2) and c(10-14). The alpha and beta chains form an alternating ring which encloses part of the gamma chain. F(1) is attached to F(0) by a central stalk formed by the gamma and epsilon chains, while a peripheral stalk is formed by the delta and b chains.

It is found in the cell inner membrane. Its function is as follows. F(1)F(0) ATP synthase produces ATP from ADP in the presence of a proton or sodium gradient. F-type ATPases consist of two structural domains, F(1) containing the extramembraneous catalytic core and F(0) containing the membrane proton channel, linked together by a central stalk and a peripheral stalk. During catalysis, ATP synthesis in the catalytic domain of F(1) is coupled via a rotary mechanism of the central stalk subunits to proton translocation. Key component of the F(0) channel; it plays a direct role in translocation across the membrane. A homomeric c-ring of between 10-14 subunits forms the central stalk rotor element with the F(1) delta and epsilon subunits. This Actinobacillus pleuropneumoniae serotype 7 (strain AP76) protein is ATP synthase subunit c.